A 212-amino-acid chain; its full sequence is MENTEKLKNSKEIVAYLVEKFPACFIAEGEAKPLKIGIFQDLAERLADDARVSKTMLRSALRQYTSSWRYLHGLKAGQARVDLDGNPGELLTEEHIEHAKQALKESKERVFASRRTNTKEEKAKQPRRPAPRKADAAAKSDKPKAAPKAAPVAVEAPLVKVDAATLKVDQGVRVVLGKSPVPATIKEVTKDDVQVQLQTGMMLRVKFEHLVL.

Composition is skewed to basic and acidic residues over residues 102–124 and 132–144; these read ALKE…EKAK and RKAD…DKPK. Residues 102-149 are disordered; sequence ALKESKERVFASRRTNTKEEKAKQPRRPAPRKADAAAKSDKPKAAPKA.

The protein belongs to the ProQ family.

The protein resides in the cytoplasm. RNA chaperone with significant RNA binding, RNA strand exchange and RNA duplexing activities. This chain is RNA chaperone ProQ, found in Aeromonas hydrophila subsp. hydrophila (strain ATCC 7966 / DSM 30187 / BCRC 13018 / CCUG 14551 / JCM 1027 / KCTC 2358 / NCIMB 9240 / NCTC 8049).